The following is a 272-amino-acid chain: Phosphatidylglycerol--prolipoprotein diacylglyceryl transferase (272 aa).

Transmembrane regions (helical) follow at residues 19–39 (ISIR…YFLV), 58–78 (LNTV…VVFY), and 94–114 (WHGG…GLIF). Arg141 is an a 1,2-diacyl-sn-glycero-3-phospho-(1'-sn-glycerol) binding site. Helical transmembrane passes span 207–227 (GTIL…IENF) and 234–254 (LGFI…MILC).

The protein belongs to the Lgt family.

The protein localises to the cell inner membrane. The enzyme catalyses L-cysteinyl-[prolipoprotein] + a 1,2-diacyl-sn-glycero-3-phospho-(1'-sn-glycerol) = an S-1,2-diacyl-sn-glyceryl-L-cysteinyl-[prolipoprotein] + sn-glycerol 1-phosphate + H(+). It functions in the pathway protein modification; lipoprotein biosynthesis (diacylglyceryl transfer). Its function is as follows. Catalyzes the transfer of the diacylglyceryl group from phosphatidylglycerol to the sulfhydryl group of the N-terminal cysteine of a prolipoprotein, the first step in the formation of mature lipoproteins. This chain is Phosphatidylglycerol--prolipoprotein diacylglyceryl transferase, found in Desulfotalea psychrophila (strain LSv54 / DSM 12343).